The following is a 712-amino-acid chain: Cyclolysin secretion/processing ATP-binding protein CyaB (712 aa).

In terms of domain architecture, Peptidase C39 spans 7-128 (QCASVPDSGL…ALWAGELLLC (122 aa)). An ABC transmembrane type-1 domain is found at 157–439 (IGEVLLISLV…LAQLWNDFQQ (283 aa)). A run of 6 helical transmembrane segments spans residues 160-180 (VLLISLVLQFISLLTPLFFQV), 194-214 (LNVIAVGFLAAILFEALLTGI), 272-292 (AVTVLLDVVFSVVFIAVMFFY), 298-318 (LVVLAALPCYFLLSLVLTPVL), 367-387 (VAAGLSVANVAMLANTGVTLI), and 390-410 (LVALGVLWVGATEVVAQRMTV). The 236-residue stretch at 471–706 (IELDRVSFRY…GGLYARLQAL (236 aa)) folds into the ABC transporter domain. Residue 505 to 512 (GRSGSGKS) coordinates ATP.

The protein belongs to the ABC transporter superfamily. Cyclolysin exporter (TC 3.A.1.109.2) family.

The protein localises to the cell membrane. In terms of biological role, involved in the export of calmodulin-sensitive adenylate cyclase-hemolysin (cyclolysin). This chain is Cyclolysin secretion/processing ATP-binding protein CyaB (cyaB), found in Bordetella pertussis (strain ATCC 9797 / DSM 5571 / CCUG 30873 / LMG 14455 / NCTC 10739 / 18323).